The sequence spans 709 residues: Polyribonucleotide nucleotidyltransferase (709 aa).

Mg(2+) contacts are provided by D486 and D492. The 60-residue stretch at 553–612 folds into the KH domain; it reads PRIHTIKINADKIKDVIGKGGSVIRALTEETGTTIEIEDDGTVKIAATSGEQAKQAIARI. The S1 motif domain occupies 622-690; the sequence is GRIYNGKVTR…RQGRIRLSMK (69 aa). The segment at 690–709 is disordered; it reads KEAQATQQEAAETSSEDPAN. Residues 691–702 show a composition bias toward low complexity; the sequence is EAQATQQEAAET.

Belongs to the polyribonucleotide nucleotidyltransferase family. As to quaternary structure, component of the RNA degradosome, which is a multiprotein complex involved in RNA processing and mRNA degradation. Mg(2+) is required as a cofactor.

The protein localises to the cytoplasm. The enzyme catalyses RNA(n+1) + phosphate = RNA(n) + a ribonucleoside 5'-diphosphate. In terms of biological role, involved in mRNA degradation. Catalyzes the phosphorolysis of single-stranded polyribonucleotides processively in the 3'- to 5'-direction. The protein is Polyribonucleotide nucleotidyltransferase of Proteus mirabilis (strain HI4320).